An 899-amino-acid polypeptide reads, in one-letter code: Periodic tryptophan protein 2 homolog (899 aa).

13 WD repeats span residues asparagine 9–phenylalanine 52, serine 53–histidine 92, serine 94–alanine 132, glutamine 149–proline 188, glycine 193–glutamate 232, glutamine 252–threonine 291, isoleucine 294–lysine 334, glycine 337–threonine 376, glutamate 379–threonine 418, proline 422–serine 464, glycine 465–glutamate 504, glutamine 507–glycine 546, and alanine 569–lysine 608. Positions aspartate 639–lysine 668 are disordered. Basic and acidic residues predominate over residues phenylalanine 647–lysine 668. Residues asparagine 669–aspartate 709 form a WD 14 repeat. Residues threonine 866–valine 899 form a disordered region. The segment covering asparagine 889 to valine 899 has biased composition (acidic residues).

This sequence belongs to the WD repeat PWP2 family.

In Neurospora crassa (strain ATCC 24698 / 74-OR23-1A / CBS 708.71 / DSM 1257 / FGSC 987), this protein is Periodic tryptophan protein 2 homolog.